Here is a 156-residue protein sequence, read N- to C-terminus: ATP synthase subunit b 1 (156 aa).

The chain crosses the membrane as a helical span at residues 7-27; the sequence is LFLQAIVFAILVWFTMKFVWP.

It belongs to the ATPase B chain family. As to quaternary structure, F-type ATPases have 2 components, F(1) - the catalytic core - and F(0) - the membrane proton channel. F(1) has five subunits: alpha(3), beta(3), gamma(1), delta(1), epsilon(1). F(0) has three main subunits: a(1), b(2) and c(10-14). The alpha and beta chains form an alternating ring which encloses part of the gamma chain. F(1) is attached to F(0) by a central stalk formed by the gamma and epsilon chains, while a peripheral stalk is formed by the delta and b chains.

It localises to the cell inner membrane. In terms of biological role, f(1)F(0) ATP synthase produces ATP from ADP in the presence of a proton or sodium gradient. F-type ATPases consist of two structural domains, F(1) containing the extramembraneous catalytic core and F(0) containing the membrane proton channel, linked together by a central stalk and a peripheral stalk. During catalysis, ATP synthesis in the catalytic domain of F(1) is coupled via a rotary mechanism of the central stalk subunits to proton translocation. Component of the F(0) channel, it forms part of the peripheral stalk, linking F(1) to F(0). This chain is ATP synthase subunit b 1, found in Albidiferax ferrireducens (strain ATCC BAA-621 / DSM 15236 / T118) (Rhodoferax ferrireducens).